Reading from the N-terminus, the 324-residue chain is Phosphate transport system permease protein PstC (324 aa).

Transmembrane regions (helical) follow at residues 29–49 (LLLT…ALSM), 87–107 (IVTA…IAFF), 126–146 (LLAG…LVPV), 173–193 (PLGI…IPFI), 235–255 (VIGG…AVAF), and 291–311 (SALL…LVIA). In terms of domain architecture, ABC transmembrane type-1 spans 83 to 311 (IYGTIVTALI…IVTFAVLVIA (229 aa)).

It belongs to the binding-protein-dependent transport system permease family. CysTW subfamily.

The protein localises to the cell inner membrane. Functionally, part of a binding-protein-dependent transport system for phosphate; probably responsible for the translocation of the substrate across the membrane. The protein is Phosphate transport system permease protein PstC (pstC) of Xylella fastidiosa (strain 9a5c).